The chain runs to 496 residues: Transcription termination/antitermination protein NusA (496 aa).

The 66-residue stretch at 135 to 200 (GQIITGIVKK…RGAQLFISRS (66 aa)) folds into the S1 motif domain. Residues 302–370 (CHTMDIAVDI…KNLNINENII (69 aa)) enclose the KH domain. 2 consecutive repeat copies span residues 364–414 (NINE…KSKL) and 440–490 (GMNA…RNIC). Positions 364-490 (NINENIIKIL…LLIMTARNIC (127 aa)) are 2 X 51 AA approximate repeats.

The protein belongs to the NusA family. Monomer. Binds directly to the core enzyme of the DNA-dependent RNA polymerase and to nascent RNA.

It is found in the cytoplasm. Its function is as follows. Participates in both transcription termination and antitermination. This chain is Transcription termination/antitermination protein NusA, found in Buchnera aphidicola subsp. Acyrthosiphon pisum (strain APS) (Acyrthosiphon pisum symbiotic bacterium).